We begin with the raw amino-acid sequence, 457 residues long: Siroheme synthase (457 aa).

Residues 1-204 (MDHLPIFCQL…ADEKAVNATT (204 aa)) form a precorrin-2 dehydrogenase /sirohydrochlorin ferrochelatase region. Residues 22–23 (DV) and 43–44 (LT) contribute to the NAD(+) site. Position 128 is a phosphoserine (serine 128). The segment at 216-457 (GEVVLVGAGP…RDKLNWFSNY (242 aa)) is uroporphyrinogen-III C-methyltransferase. Proline 225 provides a ligand contact to S-adenosyl-L-methionine. Residue aspartate 248 is the Proton acceptor of the active site. Lysine 270 (proton donor) is an active-site residue. S-adenosyl-L-methionine contacts are provided by residues 301–303 (GGD), isoleucine 306, 331–332 (TA), methionine 382, and glycine 411.

The protein in the N-terminal section; belongs to the precorrin-2 dehydrogenase / sirohydrochlorin ferrochelatase family. It in the C-terminal section; belongs to the precorrin methyltransferase family.

It carries out the reaction uroporphyrinogen III + 2 S-adenosyl-L-methionine = precorrin-2 + 2 S-adenosyl-L-homocysteine + H(+). The enzyme catalyses precorrin-2 + NAD(+) = sirohydrochlorin + NADH + 2 H(+). It catalyses the reaction siroheme + 2 H(+) = sirohydrochlorin + Fe(2+). The protein operates within cofactor biosynthesis; adenosylcobalamin biosynthesis; precorrin-2 from uroporphyrinogen III: step 1/1. It participates in cofactor biosynthesis; adenosylcobalamin biosynthesis; sirohydrochlorin from precorrin-2: step 1/1. Its pathway is porphyrin-containing compound metabolism; siroheme biosynthesis; precorrin-2 from uroporphyrinogen III: step 1/1. It functions in the pathway porphyrin-containing compound metabolism; siroheme biosynthesis; siroheme from sirohydrochlorin: step 1/1. The protein operates within porphyrin-containing compound metabolism; siroheme biosynthesis; sirohydrochlorin from precorrin-2: step 1/1. In terms of biological role, multifunctional enzyme that catalyzes the SAM-dependent methylations of uroporphyrinogen III at position C-2 and C-7 to form precorrin-2 via precorrin-1. Then it catalyzes the NAD-dependent ring dehydrogenation of precorrin-2 to yield sirohydrochlorin. Finally, it catalyzes the ferrochelation of sirohydrochlorin to yield siroheme. This Salmonella gallinarum (strain 287/91 / NCTC 13346) protein is Siroheme synthase.